Here is a 209-residue protein sequence, read N- to C-terminus: MTTLASSIEHKTKHLAAPFENDENPWMKKYCCQCKSCKMSVPVQPWLPRFFVFGILCPVFWLVNLLAWWFLQYWQPHELEFHDLQEDEYPGFYEYEAITKRTVIPIKEEVLQEIRVMQNFSDSNSEEYYESKDGMPSSFLNVNTEQVEDENDTLKKYRYAFLKKVAHDVLESHDLLRKTFRDWNLRSLLGLLIDSILIIFVVLLCKKSR.

Residues 1-49 (MTTLASSIEHKTKHLAAPFENDENPWMKKYCCQCKSCKMSVPVQPWLPR) lie on the Lumenal side of the membrane. The chain crosses the membrane as a helical span at residues 50-70 (FFVFGILCPVFWLVNLLAWWF). Over 71-184 (LQYWQPHELE…LLRKTFRDWN (114 aa)) the chain is Cytoplasmic. Residues serine 121, serine 123, and serine 125 each carry the phosphoserine modification. Position 153 is a phosphothreonine (threonine 153). A helical transmembrane segment spans residues 185–205 (LRSLLGLLIDSILIIFVVLLC). At 206–209 (KKSR) the chain is on the lumenal side.

It localises to the endomembrane system. In terms of biological role, required for receptor inhibition of inappropriately expressed a-factor receptor (STE3) in MAT a cells. Inhibits signaling by relocalizing the G protein beta-gamma (STE4-STE18) subunit to intracellular membranes. May also be a mechanism for the down-regulation of the mating pheromone response after the zygotic fusion event, promoting the transition of the new diploid cell to vegetative growth. The polypeptide is Protein ASG7 (ASG7) (Saccharomyces cerevisiae (strain ATCC 204508 / S288c) (Baker's yeast)).